Reading from the N-terminus, the 431-residue chain is U-box domain-containing protein 20 (431 aa).

A U-box domain is found at 32-106 (TIPSQFQCPI…QGWCGSSLGG (75 aa)).

The enzyme catalyses S-ubiquitinyl-[E2 ubiquitin-conjugating enzyme]-L-cysteine + [acceptor protein]-L-lysine = [E2 ubiquitin-conjugating enzyme]-L-cysteine + N(6)-ubiquitinyl-[acceptor protein]-L-lysine.. It participates in protein modification; protein ubiquitination. In terms of biological role, functions as an E3 ubiquitin ligase. This Arabidopsis thaliana (Mouse-ear cress) protein is U-box domain-containing protein 20 (PUB20).